The following is a 194-amino-acid chain: Probable GTP-binding protein EngB (194 aa).

One can recognise an EngB-type G domain in the interval 22–194 (DLPEYALAGR…AWQFIKEGME (173 aa)). GTP-binding positions include 30–37 (GRSNVGKS), 57–61 (GKTQT), 75–78 (DVPG), 142–145 (TKAD), and 174–176 (FSS). Mg(2+) is bound by residues serine 37 and threonine 59.

This sequence belongs to the TRAFAC class TrmE-Era-EngA-EngB-Septin-like GTPase superfamily. EngB GTPase family. Mg(2+) is required as a cofactor.

Its function is as follows. Necessary for normal cell division and for the maintenance of normal septation. This is Probable GTP-binding protein EngB from Listeria innocua serovar 6a (strain ATCC BAA-680 / CLIP 11262).